A 283-amino-acid polypeptide reads, in one-letter code: Cyclin-C (283 aa).

The 99-residue stretch at 46–144 (NVIQALGEHL…ILECEFYLLE (99 aa)) folds into the Cyclin N-terminal domain. Positions 252 to 283 (TILSKMPKPKPPPNSEGEQGPNGSQNSSYSQS) are disordered. Residues 272 to 283 (PNGSQNSSYSQS) are compositionally biased toward polar residues.

The protein belongs to the cyclin family. Cyclin C subfamily. As to quaternary structure, component of the Mediator complex. The cylin/CDK pair formed by CCNC/CDK8 also associates with the large subunit of RNA polymerase II.

The protein localises to the nucleus. Component of the Mediator complex, a coactivator involved in regulated gene transcription of nearly all RNA polymerase II-dependent genes. Mediator functions as a bridge to convey information from gene-specific regulatory proteins to the basal RNA polymerase II transcription machinery. Mediator is recruited to promoters by direct interactions with regulatory proteins and serves as a scaffold for the assembly of a functional preinitiation complex with RNA polymerase II and the general transcription factors. Binds to and activates cyclin-dependent kinase CDK8 that phosphorylates the CTD (C-terminal domain) of the large subunit of RNA polymerase II (RNAp II), which may inhibit the formation of a transcription initiation complex. This chain is Cyclin-C (CCNC), found in Gallus gallus (Chicken).